The following is a 543-amino-acid chain: Heparanase-like protein 1 (543 aa).

The N-terminal stretch at 1 to 24 (MGFRVCVIVVFLGCLLLVPEKTMA) is a signal peptide. Asparagine 184 carries N-linked (GlcNAc...) asparagine glycosylation. Glutamate 201 functions as the Proton donor in the catalytic mechanism. The N-linked (GlcNAc...) asparagine glycan is linked to asparagine 304. Residue glutamate 320 is the Nucleophile of the active site. N-linked (GlcNAc...) asparagine glycans are attached at residues asparagine 425 and asparagine 428.

The protein belongs to the glycosyl hydrolase 79 family.

It localises to the lysosome membrane. The protein localises to the secreted. Functionally, endoglycosidase which is a cell surface and extracellular matrix-degrading enzyme. Cleaves heparan sulfate proteoglycans (HSPGs) into heparan sulfate side chains and core proteoglycans. This Arabidopsis thaliana (Mouse-ear cress) protein is Heparanase-like protein 1.